Reading from the N-terminus, the 429-residue chain is tRNA(Ile2) 2-agmatinylcytidine synthetase TiaS (429 aa).

The interval 403–429 (KPPERPLHPSKSLEPPSTPIHSDTISL) is disordered.

The protein belongs to the TiaS family.

It localises to the cytoplasm. It catalyses the reaction cytidine(34) in tRNA(Ile2) + agmatine + ATP + H2O = 2-agmatinylcytidine(34) in tRNA(Ile2) + AMP + 2 phosphate + 2 H(+). ATP-dependent agmatine transferase that catalyzes the formation of 2-agmatinylcytidine (agm2C) at the wobble position (C34) of tRNA(Ile2), converting the codon specificity from AUG to AUA. This Hyperthermus butylicus (strain DSM 5456 / JCM 9403 / PLM1-5) protein is tRNA(Ile2) 2-agmatinylcytidine synthetase TiaS.